A 246-amino-acid polypeptide reads, in one-letter code: MAGHSKWANTRHRKAAQDAKRGKIFTKIIRELVTAAKLGGGDPDANPRLRAAVDKALSNNMTRDTLNRAIARGVGGDDDANMETIIYEGYGPGGTAVMVECLSDNRNRTVAEVRHAFSKCGGNLGTDGSVAYLFSKKGVISFEQGDEDTIMEAALEAGAEDVVTFDDGAIDVYTAWEEMGKVRDALEAAGLKADNAEVSMIPSTKADMDAETAPKLMRLIDMLEDCDDVQEVYHNGEISDEVAATL.

The interval 1–20 is disordered; the sequence is MAGHSKWANTRHRKAAQDAK.

It belongs to the TACO1 family.

It localises to the cytoplasm. This Citrobacter koseri (strain ATCC BAA-895 / CDC 4225-83 / SGSC4696) protein is Probable transcriptional regulatory protein CKO_01097.